The primary structure comprises 354 residues: UPF0283 membrane protein plu2581 (354 aa).

Transmembrane regions (helical) follow at residues 71 to 91 (MVYG…VQWI), 101 to 121 (SALG…GSLV), and 214 to 234 (ESAL…FIAW).

This sequence belongs to the UPF0283 family.

The protein localises to the cell inner membrane. This Photorhabdus laumondii subsp. laumondii (strain DSM 15139 / CIP 105565 / TT01) (Photorhabdus luminescens subsp. laumondii) protein is UPF0283 membrane protein plu2581.